We begin with the raw amino-acid sequence, 174 residues long: Protein-lysine myristoyltransferase HlyC (174 aa).

Residues His-23 and Asp-92 contribute to the active site. His-151 is a heme binding site.

It belongs to the RTX toxin acyltransferase family. In terms of assembly, monomer. Proteolytically cleaved by the protease systems ClpAP, ClpXP and FtsH, leading to its degradation.

Its subcellular location is the cytoplasm. The enzyme catalyses tetradecanoyl-[ACP] + L-lysyl-[protein] = N(6)-tetradecanoyl-L-lysyl-[protein] + holo-[ACP] + H(+). Its activity is regulated as follows. The acyltransferase activity is inhibited by heme. Protein-lysine myristoyltransferase that catalyzes myristoylation of the protoxin (HlyA) at two internal lysine residues, thereby converting it to the active toxin. The polypeptide is Protein-lysine myristoyltransferase HlyC (Escherichia coli).